A 286-amino-acid chain; its full sequence is 5-amino-6-(5-phospho-D-ribitylamino)uracil phosphatase YwtE (286 aa).

The active-site Nucleophile is the D7. Residue D7 participates in Mg(2+) binding. L8 provides a ligand contact to phosphate. D9 contributes to the Mg(2+) binding site. Phosphate-binding positions include 41–42 (TG) and K210. Positions 233 and 234 each coordinate Mg(2+). Residue N236 participates in phosphate binding.

The protein belongs to the HAD-like hydrolase superfamily. Cof family. Mg(2+) is required as a cofactor.

The catalysed reaction is 5-amino-6-(5-phospho-D-ribitylamino)uracil + H2O = 5-amino-6-(D-ribitylamino)uracil + phosphate. It functions in the pathway cofactor biosynthesis; riboflavin biosynthesis; 5-amino-6-(D-ribitylamino)uracil from GTP: step 4/4. Its function is as follows. Catalyzes the dephosphorylation of the riboflavin precursor 5-amino-6-(5-phospho-D-ribitylamino)uracil and of flavin mononucleotide (FMN) in vitro. Also catalyzes the dephosphorylation of phosphorylated 5-6 carbon sugars and monophosphate nucleotides (NMP) in vitro. The sequence is that of 5-amino-6-(5-phospho-D-ribitylamino)uracil phosphatase YwtE (ywtE) from Bacillus subtilis (strain 168).